Reading from the N-terminus, the 120-residue chain is DLWQFGQMILKETGKLPFPYYTYGGCYCGVGGRRGLGTKDDRCCYVHDCCYKKLTGCPKTDDRYSYSWLDLTIVCGEDDPCKELCECDKAIAVCFRENLGTYNKKYRYHLKPCKKADKPC.

Cystine bridges form between Cys-26–Cys-113, Cys-28–Cys-44, Cys-43–Cys-94, Cys-49–Cys-120, Cys-50–Cys-87, Cys-57–Cys-81, and Cys-75–Cys-85. The segment at 104–115 is important for membrane-damaging activities in eukaryotes and bacteria; heparin-binding; sequence KKYRYHLKPCKK.

The protein belongs to the phospholipase A2 family. Group II subfamily. D49 sub-subfamily. Homodimer; non-covalently linked (probable alternative/compact dimer conformation). In terms of tissue distribution, expressed by the venom gland.

The protein localises to the secreted. Its function is as follows. Snake venom phospholipase A2 (PLA2) that lacks enzymatic activity. Shows high myotoxin activities. Also has anticoagulant activity. A model of myotoxic mechanism has been proposed: an apo Lys49-PLA2 is activated by the entrance of a hydrophobic molecule (e.g. fatty acid) at the hydrophobic channel of the protein leading to a reorientation of a monomer. This reorientation causes a transition between 'inactive' to 'active' states, causing alignment of C-terminal and membrane-docking sites (MDoS) side-by-side and putting the membrane-disruption sites (MDiS) in the same plane, exposed to solvent and in a symmetric position for both monomers. The MDoS region stabilizes the toxin on membrane by the interaction of charged residues with phospholipid head groups. Subsequently, the MDiS region destabilizes the membrane with penetration of hydrophobic residues. This insertion causes a disorganization of the membrane, allowing an uncontrolled influx of ions (i.e. calcium and sodium), and eventually triggering irreversible intracellular alterations and cell death. In Bothrops pirajai (Piraja's lancehead), this protein is Basic phospholipase A2 homolog piratoxin-3.